Consider the following 348-residue polypeptide: Phenylalanine--tRNA ligase alpha subunit (348 aa).

Residue Glu259 coordinates Mg(2+).

It belongs to the class-II aminoacyl-tRNA synthetase family. Phe-tRNA synthetase alpha subunit type 1 subfamily. In terms of assembly, tetramer of two alpha and two beta subunits. Mg(2+) serves as cofactor.

Its subcellular location is the cytoplasm. It carries out the reaction tRNA(Phe) + L-phenylalanine + ATP = L-phenylalanyl-tRNA(Phe) + AMP + diphosphate + H(+). The protein is Phenylalanine--tRNA ligase alpha subunit of Lacticaseibacillus paracasei (strain ATCC 334 / BCRC 17002 / CCUG 31169 / CIP 107868 / KCTC 3260 / NRRL B-441) (Lactobacillus paracasei).